Reading from the N-terminus, the 575-residue chain is MSGEWGHLGQTLIWAVWVLAAATEGPAADAPVRSTRLGWVRGKQATVLGSTMPVNVFLGIPFAAPPLGPLRFKRPKPALLWNDSRDATSYPKLCLQNSVWLLSDQHFLKVHYPNLEVSEDCLYLNIYAPAHANTGSKLPVMVWFPGGAFETGSASIFDGSALAAYEDVLIVTTQYRLGIFGFFKTGDQHAPGNWAFLDQLAALTWVQENIEFFGGDPHSVTIFGESAGAISVSGLVLSPMASGLFHKAIMESGVAIIPFLRAPDDERNEDLQVIARICGCNVSDSVALLQCLRAKSSEELLDINKKTKSFTRVVDGFFFPDEPLDLLTEKTFNSIPSVIGVNNHECGFLLPMKEFPEILGGSNKSLALHLIHRVLHIPNQYLYLVADQYFYNKHSPVEIRDSFLDLLGDVFFVVPGVVTARYHRDAGAPVYFYEFQHPPECLKDTRPAFVKADHSDEIRFVFGGAFLKGNIVMFEGATEEEKLLSRKMMRYWANFARTGDPNGEGLPLWPAYSQSEQYLKLDLNISVGQKLKEQEVEFWSDTLPLIMSMSTAPPGPPVPLLSLSVLLPFLFSSAP.

A signal peptide spans 1–27 (MSGEWGHLGQTLIWAVWVLAAATEGPA). The N-linked (GlcNAc...) asparagine glycan is linked to N82. A disulfide bond links C94 and C121. S226 acts as the Acyl-ester intermediate in catalysis. Cysteines 280 and 291 form a disulfide. The N-linked (GlcNAc...) asparagine glycan is linked to N281. The active-site Charge relay system is E345. N-linked (GlcNAc...) asparagine glycosylation occurs at N363. Residue H454 is the Charge relay system of the active site. A glycan (N-linked (GlcNAc...) asparagine) is linked at N524.

The protein belongs to the type-B carboxylesterase/lipase family. In terms of processing, N-glycosylated.

The protein localises to the secreted. The catalysed reaction is a carboxylic ester + H2O = an alcohol + a carboxylate + H(+). In terms of biological role, involved in the detoxification of xenobiotics and in the activation of ester and amide prodrugs. The polypeptide is Carboxylesterase 5A (CES5A) (Canis lupus familiaris (Dog)).